A 412-amino-acid polypeptide reads, in one-letter code: Acyl-[acyl-carrier-protein] hydrolase FATB2, chloroplastic (412 aa).

Low complexity-rich tracts occupy residues 1-13 and 56-66; these read TAAS…VPSA and GSSVGLKSGGL. Residues 1 to 46 constitute a chloroplast transit peptide; that stretch reads TAASSAFFPVPSADTSSRPGKLGNGPSSFSPLKPKSIPNGGLQVKA. Residues 1-78 are disordered; that stretch reads TAASSAFFPV…HDDAPSAPPP (78 aa). Residues Asn-311, His-313, and Cys-348 contribute to the active site.

The protein belongs to the acyl-ACP thioesterase family.

Its subcellular location is the plastid. It localises to the chloroplast. The enzyme catalyses tetradecanoyl-[ACP] + H2O = tetradecanoate + holo-[ACP] + H(+). It catalyses the reaction hexadecanoyl-[ACP] + H2O = hexadecanoate + holo-[ACP] + H(+). Functionally, plays an essential role in chain termination during de novo fatty acid synthesis. Possesses thioesterase activity for medium chain acyl-ACPs. Substrate preference is 14:0 &gt; 16:0 &gt; 16:1. This chain is Acyl-[acyl-carrier-protein] hydrolase FATB2, chloroplastic, found in Cuphea viscosissima (Blue waxweed).